The primary structure comprises 185 residues: Ribosome-recycling factor (185 aa).

This sequence belongs to the RRF family.

The protein localises to the cytoplasm. In terms of biological role, responsible for the release of ribosomes from messenger RNA at the termination of protein biosynthesis. May increase the efficiency of translation by recycling ribosomes from one round of translation to another. The chain is Ribosome-recycling factor from Saccharopolyspora erythraea (strain ATCC 11635 / DSM 40517 / JCM 4748 / NBRC 13426 / NCIMB 8594 / NRRL 2338).